A 406-amino-acid polypeptide reads, in one-letter code: Peptide chain release factor PrfB3, chloroplastic (406 aa).

Belongs to the prokaryotic/mitochondrial release factor family. In terms of assembly, interacts with PDE338.

Its subcellular location is the plastid. It is found in the chloroplast stroma. The protein localises to the chloroplast. Its function is as follows. Involved in the light- and stress-dependent regulation of stability of 3' processed petB transcripts, thus regulating cytochrome b6 accumulation, a rate-limiting step in photosynthetic electron transport. May be recruited to specifically protect petB transcripts against 3'-5' exonucleolytic attack by masking the 3' ends. Does not function as release factor. This is Peptide chain release factor PrfB3, chloroplastic from Arabidopsis thaliana (Mouse-ear cress).